The following is an 896-amino-acid chain: Protein translocase subunit SecA (896 aa).

ATP-binding positions include Gln-87, 105–109 (GEGKT), and Asp-512. Disordered stretches follow at residues 565 to 584 (RRID…PGSS) and 840 to 896 (EAAQ…AHEA). Positions 876, 878, 887, and 888 each coordinate Zn(2+). A compositionally biased stretch (basic residues) spans 882–896 (KKYKHCHGNRAAHEA).

This sequence belongs to the SecA family. Monomer and homodimer. Part of the essential Sec protein translocation apparatus which comprises SecA, SecYEG and auxiliary proteins SecDF-YajC and YidC. The cofactor is Zn(2+).

The protein localises to the cell inner membrane. It is found in the cytoplasm. It carries out the reaction ATP + H2O + cellular proteinSide 1 = ADP + phosphate + cellular proteinSide 2.. Part of the Sec protein translocase complex. Interacts with the SecYEG preprotein conducting channel. Has a central role in coupling the hydrolysis of ATP to the transfer of proteins into and across the cell membrane, serving both as a receptor for the preprotein-SecB complex and as an ATP-driven molecular motor driving the stepwise translocation of polypeptide chains across the membrane. This is Protein translocase subunit SecA from Mannheimia succiniciproducens (strain KCTC 0769BP / MBEL55E).